The primary structure comprises 145 residues: MVKVMVVAEVRPSEDVNKVLSAISNFFDFEKTNTRKEGIIDILVLEARTLKSLLKFHRVLRNERILDSARKYLMKGIEGNTIAFMIHKQAAAVGVLSFVDNDKESPLGAIKFYIEYQNPKEVVDWLAPRTAHGVPLWDNPIPPDV.

This sequence belongs to the UPF0201 family.

The sequence is that of UPF0201 protein M164_1168 from Saccharolobus islandicus (strain M.16.4 / Kamchatka #3) (Sulfolobus islandicus).